The chain runs to 192 residues: Flavin prenyltransferase UbiX (192 aa).

FMN is bound by residues 10–12, Ser-36, 92–95, and Arg-127; these read GAS and SVAT. Dimethylallyl phosphate is bound by residues Tyr-157 and Lys-173.

Belongs to the UbiX/PAD1 family.

It carries out the reaction dimethylallyl phosphate + FMNH2 = prenylated FMNH2 + phosphate. Its function is as follows. Flavin prenyltransferase that catalyzes the synthesis of the prenylated FMN cofactor (prenyl-FMN) for 4-hydroxy-3-polyprenylbenzoic acid decarboxylase UbiD. The prenyltransferase is metal-independent and links a dimethylallyl moiety from dimethylallyl monophosphate (DMAP) to the flavin N5 and C6 atoms of FMN. The protein is Flavin prenyltransferase UbiX of Chlamydia trachomatis serovar D (strain ATCC VR-885 / DSM 19411 / UW-3/Cx).